The following is a 108-amino-acid chain: PTS system fructose-like EIIB component 1 (108 aa).

The 104-residue stretch at 1–104 folds into the PTS EIIB type-2 domain; that stretch reads MSKKLIALCA…IIKEIEEMIA (104 aa). Residue cysteine 11 is the Phosphocysteine intermediate of the active site. Cysteine 11 is modified (phosphocysteine; by EIIA).

It localises to the cytoplasm. It carries out the reaction D-fructose(out) + N(pros)-phospho-L-histidyl-[protein] = D-fructose 1-phosphate(in) + L-histidyl-[protein]. Its function is as follows. The phosphoenolpyruvate-dependent sugar phosphotransferase system (sugar PTS), a major carbohydrate active transport system, catalyzes the phosphorylation of incoming sugar substrates concomitantly with their translocation across the cell membrane. The enzyme II FryABC PTS system is involved in fructose transport. The sequence is that of PTS system fructose-like EIIB component 1 (fryB) from Escherichia coli O157:H7.